A 299-amino-acid chain; its full sequence is HTH-type transcriptional regulator PgrR (299 aa).

In terms of domain architecture, HTH lysR-type spans 4-61 (EEIADLMAFVVVAEERSFTRAAARLSMAQSALSQIVRRIEERLGLRLLTRTTRSVVPT). Residues 21 to 40 (FTRAAARLSMAQSALSQIVR) constitute a DNA-binding region (H-T-H motif).

This sequence belongs to the LysR transcriptional regulatory family.

Functionally, regulates the expression of genes involved in peptidoglycan (PG) degradation. Could play a role in switch control between recycling and degradation of PG peptides. Negatively regulates the expression of the ycjY-ymjD-ymjC-mpaA operon by binding to the PgrR-box. In addition, other genes are predicted to be under the control of PgrR, including genes related to membrane formation and function. This Escherichia coli (strain K12) protein is HTH-type transcriptional regulator PgrR (pgrR).